The primary structure comprises 804 residues: Leucine--tRNA ligase (804 aa).

The short motif at 39 to 50 is the 'HIGH' region element; it reads PFPSGKGLHVGH. The 'KMSKS' region motif lies at 573–577; it reads KMSKS. Lysine 576 contacts ATP.

Belongs to the class-I aminoacyl-tRNA synthetase family.

Its subcellular location is the cytoplasm. It carries out the reaction tRNA(Leu) + L-leucine + ATP = L-leucyl-tRNA(Leu) + AMP + diphosphate. This Lactobacillus helveticus (strain DPC 4571) protein is Leucine--tRNA ligase.